We begin with the raw amino-acid sequence, 630 residues long: GATA-type transcription factor SRE1 (630 aa).

2 disordered regions span residues 1 to 139 (MTGL…TPLW) and 162 to 203 (DRPT…RLTD). Polar residues-rich tracts occupy residues 66 to 82 (DNTQ…QLQN), 115 to 133 (KAQS…NCGT), and 175 to 196 (YGSS…TNDG). The segment at 128 to 152 (CSNCGTKRTPLWRRSPTGATICNAC) adopts a GATA-type 1 zinc-finger fold. The cystein-rich region (CRR) stretch occupies residues 219–237 (CPGGGSCNGTGGAEGCDGC). The interval 256–283 (HTPRTSPQVSTQGGPGSTEGDAGSSNPE) is disordered. A compositionally biased stretch (polar residues) spans 258-267 (PRTSPQVSTQ). The GATA-type 2 zinc-finger motif lies at 291–315 (CQNCQTTVTPLWRRDENGHPICNAC). A disordered region spans residues 339 to 609 (KRVVPAMREQ…AKAERRARLQ (271 aa)). The span at 349 to 363 (SPPSATQSSNGSVSP) shows a compositional bias: polar residues. Low complexity-rich tracts occupy residues 436–447 (NNHNNGETTNTH) and 492–503 (SSSSASFPNNNP). A compositionally biased stretch (polar residues) spans 504 to 513 (GRFNSISSLL). The span at 558-568 (SHSPPRFSPSL) shows a compositional bias: low complexity. Over residues 595-609 (VDHRDAKAERRARLQ) the composition is skewed to basic and acidic residues. A coiled-coil region spans residues 595–630 (VDHRDAKAERRARLQREAQDMREALKAKERELALLE).

It is found in the nucleus. In terms of biological role, GATA-type transcription repressor that regulates iron- acquisition genes through specific binding the GATA sequence element 5'-(G/A)ATC(T/A)GATAA-3' of target promoters in an iron- and zinc-dependent manner. Regulation occurs via direct binding of iron ions. Iron acquisition regulation is critical for survival under both iron-limiting conditions (to acquire essential iron) and iron-replete conditions (to limit iron toxicity). SRE1 targets include genes encoding a number of key iron-regulated factors such as those involved in siderophore biosynthesis, presumed ferric reductase activity, iron-responsive transcriptional regulation, oxidative stress response, as well as genes encoding a number of putative oxidoreductases, metabolic and mitochondrial enzymes, superoxide dismutase, and genes previously identified as induced during nitrosative stress. This Ajellomyces capsulatus (Darling's disease fungus) protein is GATA-type transcription factor SRE1.